The following is a 156-amino-acid chain: Flagellar assembly factor FliW (156 aa).

Belongs to the FliW family. As to quaternary structure, interacts with translational regulator CsrA and flagellin(s).

It is found in the cytoplasm. In terms of biological role, acts as an anti-CsrA protein, binds CsrA and prevents it from repressing translation of its target genes, one of which is flagellin. Binds to flagellin and participates in the assembly of the flagellum. This Syntrophomonas wolfei subsp. wolfei (strain DSM 2245B / Goettingen) protein is Flagellar assembly factor FliW.